The sequence spans 283 residues: Protein/nucleic acid deglycase HchA (283 aa).

Zn(2+) contacts are provided by histidine 86, glutamate 91, and histidine 123. Cysteine 185 (nucleophile) is an active-site residue.

This sequence belongs to the peptidase C56 family. HchA subfamily. In terms of assembly, homodimer.

Its subcellular location is the cytoplasm. It carries out the reaction N(omega)-(1-hydroxy-2-oxopropyl)-L-arginyl-[protein] + H2O = lactate + L-arginyl-[protein] + H(+). The enzyme catalyses N(6)-(1-hydroxy-2-oxopropyl)-L-lysyl-[protein] + H2O = lactate + L-lysyl-[protein] + H(+). It catalyses the reaction S-(1-hydroxy-2-oxopropyl)-L-cysteinyl-[protein] + H2O = lactate + L-cysteinyl-[protein] + H(+). The catalysed reaction is N(omega)-(1-hydroxy-2-oxoethyl)-L-arginyl-[protein] + H2O = L-arginyl-[protein] + glycolate + H(+). It carries out the reaction N(6)-(1-hydroxy-2-oxoethyl)-L-lysyl-[protein] + H2O = glycolate + L-lysyl-[protein] + H(+). The enzyme catalyses S-(1-hydroxy-2-oxoethyl)-L-cysteinyl-[protein] + H2O = glycolate + L-cysteinyl-[protein] + H(+). It catalyses the reaction N(2)-(1-hydroxy-2-oxopropyl)-dGTP + H2O = lactate + dGTP + H(+). The catalysed reaction is N(2)-(1-hydroxy-2-oxopropyl)-GTP + H2O = lactate + GTP + H(+). It carries out the reaction N(2)-(1-hydroxy-2-oxopropyl)-GDP + H2O = lactate + GDP + H(+). The enzyme catalyses N(2)-(1-hydroxy-2-oxopropyl)-GMP + H2O = lactate + GMP + H(+). It catalyses the reaction N(2)-(1-hydroxy-2-oxoethyl)-dGTP + H2O = dGTP + glycolate + H(+). The catalysed reaction is N(2)-(1-hydroxy-2-oxoethyl)-GTP + H2O = glycolate + GTP + H(+). It carries out the reaction N(2)-(1-hydroxy-2-oxoethyl)-GDP + H2O = glycolate + GDP + H(+). The enzyme catalyses N(2)-(1-hydroxy-2-oxoethyl)-GMP + H2O = glycolate + GMP + H(+). It catalyses the reaction an N(2)-(1-hydroxy-2-oxopropyl)-guanosine in RNA + H2O = a guanosine in RNA + lactate + H(+). The catalysed reaction is an N(2)-(1-hydroxy-2-oxopropyl)-2'-deoxyguanosine in DNA + H2O = a 2'-deoxyguanosine in DNA + lactate + H(+). It carries out the reaction an N(2)-(1-hydroxy-2-oxoethyl)-guanosine in RNA + H2O = a guanosine in RNA + glycolate + H(+). The enzyme catalyses an N(2)-(1-hydroxy-2-oxoethyl)-2'-deoxyguanosine in DNA + H2O = a 2'-deoxyguanosine in DNA + glycolate + H(+). Protein and nucleotide deglycase that catalyzes the deglycation of the Maillard adducts formed between amino groups of proteins or nucleotides and reactive carbonyl groups of glyoxals. Thus, functions as a protein deglycase that repairs methylglyoxal- and glyoxal-glycated proteins, and releases repaired proteins and lactate or glycolate, respectively. Deglycates cysteine, arginine and lysine residues in proteins, and thus reactivates these proteins by reversing glycation by glyoxals. Acts on early glycation intermediates (hemithioacetals and aminocarbinols), preventing the formation of Schiff bases and advanced glycation endproducts (AGE). Also functions as a nucleotide deglycase able to repair glycated guanine in the free nucleotide pool (GTP, GDP, GMP, dGTP) and in DNA and RNA. Is thus involved in a major nucleotide repair system named guanine glycation repair (GG repair), dedicated to reversing methylglyoxal and glyoxal damage via nucleotide sanitization and direct nucleic acid repair. Plays an important role in protecting cells from carbonyl stress. This chain is Protein/nucleic acid deglycase HchA, found in Escherichia coli (strain K12 / MC4100 / BW2952).